The sequence spans 319 residues: Bidirectional sugar transporter SWEET15 (319 aa).

The Extracellular portion of the chain corresponds to 1 to 10 (MAFMSMERST). The chain crosses the membrane as a helical span at residues 11–31 (WAFTFGILGNLISLMVFLSPL). The 87-residue stretch at 13–99 (FTFGILGNLI…AMYLAYAPKS (87 aa)) folds into the MtN3/slv 1 domain. At 32–50 (PTFYRVYRKKSTEGFQSTP) the chain is on the cytoplasmic side. The chain crosses the membrane as a helical span at residues 51 to 71 (YVVTLFSCMLWMYYAFVKSGA). A topological domain (extracellular) is located at residue glutamate 72. Residues 73–93 (LLVTINGVGCVIETVYLAMYL) form a helical membrane-spanning segment. Residues 94–106 (AYAPKSARMLTAK) lie on the Cytoplasmic side of the membrane. Residues 107-127 (MLLGLNIGLFGVIALVTLLLS) form a helical membrane-spanning segment. The Extracellular segment spans residues 128–134 (RGELRVH). Residues 135–155 (VLGWICVAVSLSVFAAPLSII) traverse the membrane as a helical segment. Positions 135–219 (VLGWICVAVS…ALYMAYRSKK (85 aa)) constitute a MtN3/slv 2 domain. Over 156–167 (RLVIRTKSVEFM) the chain is Cytoplasmic. Residues 168-188 (PFSLSFFLVLSAVIWFLYGLL) form a helical membrane-spanning segment. At 189-191 (KKD) the chain is on the extracellular side. Residues 192–212 (VFVALPNVLGFVFGVAQMALY) form a helical membrane-spanning segment. Over 213-319 (MAYRSKKPLV…KPDMAIVVEV (107 aa)) the chain is Cytoplasmic.

It belongs to the SWEET sugar transporter family. In terms of assembly, forms homooligomers and/or heterooligomers.

The protein resides in the cell membrane. Its function is as follows. Mediates both low-affinity uptake and efflux of sugar across the plasma membrane. This is Bidirectional sugar transporter SWEET15 (SWEET15) from Oryza sativa subsp. indica (Rice).